Here is a 246-residue protein sequence, read N- to C-terminus: 1-(5-phosphoribosyl)-5-[(5-phosphoribosylamino)methylideneamino] imidazole-4-carboxamide isomerase (246 aa).

Aspartate 8 (proton acceptor) is an active-site residue. Catalysis depends on aspartate 129, which acts as the Proton donor.

Belongs to the HisA/HisF family.

It is found in the cytoplasm. It carries out the reaction 1-(5-phospho-beta-D-ribosyl)-5-[(5-phospho-beta-D-ribosylamino)methylideneamino]imidazole-4-carboxamide = 5-[(5-phospho-1-deoxy-D-ribulos-1-ylimino)methylamino]-1-(5-phospho-beta-D-ribosyl)imidazole-4-carboxamide. It participates in amino-acid biosynthesis; L-histidine biosynthesis; L-histidine from 5-phospho-alpha-D-ribose 1-diphosphate: step 4/9. This Nitrobacter hamburgensis (strain DSM 10229 / NCIMB 13809 / X14) protein is 1-(5-phosphoribosyl)-5-[(5-phosphoribosylamino)methylideneamino] imidazole-4-carboxamide isomerase.